The chain runs to 226 residues: Killer cell lectin-like receptor subfamily E member 1 (226 aa).

The disordered stretch occupies residues 1–28 (MDEAPVTRSTLNVNSQQKSKAKNKIKNT). The Cytoplasmic portion of the chain corresponds to 1 to 68 (MDEAPVTRST…GKGNCSPPWR (68 aa)). Residues 7 to 18 (TRSTLNVNSQQK) show a composition bias toward polar residues. A helical; Signal-anchor for type II membrane protein membrane pass occupies residues 69-89 (LLSSVLGAMCLLLMAVAMVMT). Over 90 to 226 (TFTTKSSSER…ANKLTYICKK (137 aa)) the chain is Extracellular. 3 disulfide bridges follow: cysteine 113–cysteine 124, cysteine 141–cysteine 224, and cysteine 202–cysteine 216. Positions 120–225 (FRCSCYFFSK…CANKLTYICK (106 aa)) constitute a C-type lectin domain. Asparagine 145 carries N-linked (GlcNAc...) asparagine glycosylation.

Heterodimer; with KLRI1 or KLRI2. As to expression, expressed in natural killer (NK) cells (at protein level). Also detected in natural killer T (NKT) cells (at protein level). Has little or no expression in T cells (at protein level).

The protein resides in the cell membrane. Its function is as follows. Lectin-like receptor for natural killer (NK) cells. Can either inhibit or activate NK cell cytotoxic activity, depending on its binding partner. Heterodimer formation with KLRI1 mediates NK cell inhibition whereas heterodimer formation with KLRI2 mediates NK cell activation. Plays a role in allogeneic recognition by the immune system. The protein is Killer cell lectin-like receptor subfamily E member 1 of Mus musculus (Mouse).